The primary structure comprises 82 residues: T-complex protein 1 subunit gamma (82 aa).

Glycine 15 provides a ligand contact to ADP. Position 15 (glycine 15) interacts with ATP. Aspartate 66 serves as a coordination point for Mg(2+). ADP contacts are provided by glycine 67, threonine 68, threonine 69, and serine 70. The ATP site is built by glycine 67, threonine 68, and threonine 69.

Belongs to the TCP-1 chaperonin family. Component of the chaperonin-containing T-complex (TRiC), a hexadecamer composed of two identical back-to-back stacked rings enclosing a protein folding chamber. Each ring is made up of eight different subunits: TCP1/CCT1, CCT2, CCT3, CCT4, CCT5, CCT6A/CCT6, CCT7, CCT8. Interacts with PACRG. Interacts with DNAAF4. Interacts with DLEC1.

The protein resides in the cytoplasm. It carries out the reaction ATP + H2O = ADP + phosphate + H(+). Its function is as follows. Component of the chaperonin-containing T-complex (TRiC), a molecular chaperone complex that assists the folding of actin, tubulin and other proteins upon ATP hydrolysis. The TRiC complex mediates the folding of WRAP53/TCAB1, thereby regulating telomere maintenance. As part of the TRiC complex may play a role in the assembly of BBSome, a complex involved in ciliogenesis regulating transports vesicles to the cilia. This Sus scrofa (Pig) protein is T-complex protein 1 subunit gamma (CCT3).